Consider the following 486-residue polypeptide: Probable transporter MCH1 (486 aa).

12 helical membrane passes run 31 to 51, 68 to 88, 95 to 115, 135 to 155, 174 to 194, 211 to 231, 268 to 288, 312 to 333, 349 to 369, 377 to 397, 409 to 429, and 457 to 477; these read IFAL…FSMY, SVSI…GYLG, YLAL…SGIF, EMAL…YASL, TYTP…SSLW, VAGI…IIFF, FFTD…GGPF, FSTH…VGFS, VIAL…FTVF, VVTI…PTIV, IWGS…LLFA, and FVIT…IWVF.

This sequence belongs to the major facilitator superfamily.

It localises to the vacuole membrane. Functionally, probable transporter. The chain is Probable transporter MCH1 (MCH1) from Yarrowia lipolytica (strain CLIB 122 / E 150) (Yeast).